The chain runs to 376 residues: uncharacterized protein (376 aa).

This sequence belongs to the mimivirus R1 family.

This is an uncharacterized protein from Acanthamoeba polyphaga (Amoeba).